The primary structure comprises 142 residues: Small ribosomal subunit protein uS9 (142 aa).

It belongs to the universal ribosomal protein uS9 family.

This chain is Small ribosomal subunit protein uS9 (RPS16), found in Debaryomyces hansenii (strain ATCC 36239 / CBS 767 / BCRC 21394 / JCM 1990 / NBRC 0083 / IGC 2968) (Yeast).